The primary structure comprises 139 residues: uncharacterized protein (139 aa).

In terms of domain architecture, Globin spans 1–133 (MLSEETIRVI…LAKTLITLEK (133 aa)).

This sequence belongs to the globin family.

This is an uncharacterized protein from Aquifex aeolicus (strain VF5).